A 388-amino-acid polypeptide reads, in one-letter code: ATP phosphoribosyltransferase regulatory subunit (388 aa).

Belongs to the class-II aminoacyl-tRNA synthetase family. HisZ subfamily. As to quaternary structure, heteromultimer composed of HisG and HisZ subunits.

The protein resides in the cytoplasm. It participates in amino-acid biosynthesis; L-histidine biosynthesis; L-histidine from 5-phospho-alpha-D-ribose 1-diphosphate: step 1/9. Functionally, required for the first step of histidine biosynthesis. May allow the feedback regulation of ATP phosphoribosyltransferase activity by histidine. This Acinetobacter baumannii (strain AB307-0294) protein is ATP phosphoribosyltransferase regulatory subunit.